The chain runs to 265 residues: Serine protease 1 (265 aa).

An N-terminal signal peptide occupies residues 1-21 (MKLFVFLALAVAAATAVPAPA). Residues 22–35 (QKLTPTPIKDIQGR) constitute a propeptide that is removed on maturation. The region spanning 36 to 262 (ITNGYPAYEG…YLDWIRDNTG (227 aa)) is the Peptidase S1 domain. Cysteines 63 and 79 form a disulfide. Catalysis depends on charge relay system residues histidine 78 and aspartate 123. Intrachain disulfides connect cysteine 189/cysteine 201 and cysteine 211/cysteine 239. Serine 215 serves as the catalytic Charge relay system.

Belongs to the peptidase S1 family. In terms of tissue distribution, abundantly expressed in the larval gut.

Its function is as follows. Major function may be to aid in digestion. The sequence is that of Serine protease 1 from Drosophila melanogaster (Fruit fly).